A 575-amino-acid polypeptide reads, in one-letter code: G2/mitotic-specific cyclin-B3 (575 aa).

The D-box signature appears at 75 to 83 (RSALGNLTN). At S215 the chain carries Phosphoserine.

This sequence belongs to the cyclin family. Cyclin AB subfamily. Interacts with Cdk1 kinase. Ubiquitinated. Ubiquitination leads to its degradation in early anaphase. As to expression, in embryo, it is expressed in all mitotically proliferating cells, with a high level in neuroblasts. Not expressed in old embryos and thereafter. Not expressed in endoreplicating tissues.

It is found in the nucleus. Functionally, cyclins are positive regulatory subunits of the cyclin-dependent kinases (CDKs), and thereby play an essential role in the control of the cell cycle, notably via their destruction during cell division. Probably functions redundantly with other cyclins in regulation of cell cycle. Its presence may be required to delay a deadline for completing cytokinesis that is ordinary imposed by nuclear envelope reformation. Degradation of CycB and CycB3 promote cytokinesis furrow initiation and ingression. Required with CycB for female fertility. The polypeptide is G2/mitotic-specific cyclin-B3 (CycB3) (Drosophila melanogaster (Fruit fly)).